The chain runs to 949 residues: MAM domain-containing glycosylphosphatidylinositol anchor protein 2 (949 aa).

The signal sequence occupies residues 1–25; it reads MDLVYGLVWLLTVLLEGISGQGVYA. 2 Ig-like domains span residues 27–127 and 134–232; these read PTVR…IRVD and PVVT…KMVS. Disulfide bonds link cysteine 62-cysteine 110 and cysteine 159-cysteine 216. N-linked (GlcNAc...) asparagine glycans are attached at residues asparagine 92, asparagine 213, and asparagine 237. 4 consecutive Ig-like domains span residues 242-328, 340-436, 442-533, and 540-627; these read PSIK…NIIV, PDPY…VNIS, PNLT…ALVQ, and PAVE…FLVT. Disulfide bonds link cysteine 264-cysteine 310 and cysteine 359-cysteine 417. 5 N-linked (GlcNAc...) asparagine glycosylation sites follow: asparagine 434, asparagine 443, asparagine 504, asparagine 610, and asparagine 703. 2 disulfides stabilise this stretch: cysteine 465-cysteine 515 and cysteine 561-cysteine 611. Residues 638-738 enclose the Fibronectin type-III domain; sequence DTYNPVWQNR…TIRVIKYTGE (101 aa). The region spanning 739 to 914 is the MAM domain; that stretch reads FHCGFEDGNI…VSIAEGECAK (176 aa). Aspartate 924 is lipidated: GPI-anchor amidated aspartate. Residues 925 to 949 constitute a propeptide, removed in mature form; the sequence is GAVGILVHIWLFPVIILISILSPRR.

In terms of assembly, interacts (through the Ig-like domains) with NLGN2.

The protein localises to the cell membrane. May be involved in cell-cell interactions. In Mus musculus (Mouse), this protein is MAM domain-containing glycosylphosphatidylinositol anchor protein 2 (Mdga2).